The chain runs to 156 residues: Small ribosomal subunit protein uS7 (156 aa).

The protein belongs to the universal ribosomal protein uS7 family. Part of the 30S ribosomal subunit. Contacts proteins S9 and S11.

In terms of biological role, one of the primary rRNA binding proteins, it binds directly to 16S rRNA where it nucleates assembly of the head domain of the 30S subunit. Is located at the subunit interface close to the decoding center, probably blocks exit of the E-site tRNA. This chain is Small ribosomal subunit protein uS7, found in Parafrankia sp. (strain EAN1pec).